The primary structure comprises 351 residues: uncharacterized protein (351 aa).

Mn(2+) is bound by residues Asp-215, Asp-226, His-290, Glu-319, and Glu-333.

This sequence belongs to the peptidase M24B family. The cofactor is Mn(2+).

This is an uncharacterized protein from Staphylococcus aureus (strain bovine RF122 / ET3-1).